A 349-amino-acid polypeptide reads, in one-letter code: Twinfilin-2 (349 aa).

Ala-2 is modified (N-acetylalanine). 2 ADF-H domains span residues 4 to 139 (QTGI…KHLS) and 177 to 313 (GLAF…DEVH). Residue Lys-14 is modified to N6-acetyllysine. Residue Tyr-309 is modified to Phosphotyrosine. The segment at 322-349 (AFAKPKGPGGKRGHKRLIRGPGENGEDS) is disordered. A compositionally biased stretch (basic residues) spans 330 to 339 (GGKRGHKRLI). Ser-349 is modified (phosphoserine).

It belongs to the actin-binding proteins ADF family. Twinfilin subfamily. Interacts with G-actin; ADP-actin form and capping protein (CP). Isoform 2 interacts (via its N-terminal ADF-H domain) with G-actin (ADP-bound form) with significantly higher affinity than isoform 1. May also be able to interact with TWF1 and phosphoinositides, PI(4,5)P2. When bound to PI(4,5)P2, it is down-regulated. Interacts with MYO7A. Phosphorylated on both serine/threonine and tyrosine. As to expression, isoform 1 is ubiquitously expressed (at protein level). Isoform 2 expression is restricted to heart and skeletal muscle where it is the predominant form.

The protein localises to the cytoplasm. Its subcellular location is the cytoskeleton. It localises to the perinuclear region. The protein resides in the cell projection. It is found in the stereocilium. Actin-binding protein involved in motile and morphological processes. Inhibits actin polymerization, likely by sequestering G-actin. By capping the barbed ends of filaments, it also regulates motility. Seems to play an important role in clathrin-mediated endocytosis and distribution of endocytic organelles. May play a role in regulating the mature length of the middle and short rows of stereocilia. In Mus musculus (Mouse), this protein is Twinfilin-2 (Twf2).